The sequence spans 167 residues: Small ribosomal subunit protein uS5 (167 aa).

The 64-residue stretch at L12–V75 folds into the S5 DRBM domain.

Belongs to the universal ribosomal protein uS5 family. In terms of assembly, part of the 30S ribosomal subunit. Contacts proteins S4 and S8.

In terms of biological role, with S4 and S12 plays an important role in translational accuracy. Located at the back of the 30S subunit body where it stabilizes the conformation of the head with respect to the body. The polypeptide is Small ribosomal subunit protein uS5 (Levilactobacillus brevis (strain ATCC 367 / BCRC 12310 / CIP 105137 / JCM 1170 / LMG 11437 / NCIMB 947 / NCTC 947) (Lactobacillus brevis)).